Reading from the N-terminus, the 680-residue chain is Trehalase (680 aa).

The interval 1-27 (MVLHAQPPDQSTETAREAKALAGATDG) is disordered.

It belongs to the glycosyl hydrolase 15 family. As to quaternary structure, homomultimer. Phosphate is required as a cofactor.

It carries out the reaction alpha,alpha-trehalose + H2O = alpha-D-glucose + beta-D-glucose. It participates in glycan degradation; trehalose degradation; D-glucose from alpha,alpha-trehalose: step 1/1. In terms of biological role, catalyzes the hydrolysis of alpha,alpha-trehalose into two molecules of D-glucose. This chain is Trehalase, found in Mycobacterium tuberculosis (strain ATCC 25618 / H37Rv).